Here is a 177-residue protein sequence, read N- to C-terminus: MTSQVRQNFHQDCEAAINRQINLELYASYVYLSMAYYFDRDDQALHNFAKFFKNQSHEEREHAEKLMKVQNQRGGRIFLQDVKKPEKDEWGSGVEALESSLQLEKSVNQSLLDLHKVCSEHNDPHMCDFIETHYLDEQVKSIKELGDWVTNLRRMGAPQNGMAEYLFDKHTLGKEST.

The 150-residue stretch at 7–156 (QNFHQDCEAA…DWVTNLRRMG (150 aa)) folds into the Ferritin-like diiron domain. 5 residues coordinate Fe cation: glutamate 24, glutamate 59, histidine 62, glutamate 104, and glutamine 138.

This sequence belongs to the ferritin family. As to quaternary structure, oligomer of 24 subunits. There are at least two types of subunits. The functional molecule forms a roughly spherical shell with a diameter of 12 nm and contains a central cavity into which the insoluble mineral iron core is deposited. Liver, gonads, head kidney, heart and spleen.

The enzyme catalyses 4 Fe(2+) + O2 + 4 H(+) = 4 Fe(3+) + 2 H2O. Stores iron in a soluble, non-toxic, readily available form. Important for iron homeostasis. Has ferroxidase activity. Iron is taken up in the ferrous form and deposited as ferric hydroxides after oxidation. The protein is Ferritin, heavy subunit of Salmo salar (Atlantic salmon).